A 215-amino-acid chain; its full sequence is Chaperone protein TorD (215 aa).

This sequence belongs to the TorD/DmsD family. TorD subfamily.

The protein localises to the cytoplasm. Functionally, involved in the biogenesis of TorA. Acts on TorA before the insertion of the molybdenum cofactor and, as a result, probably favors a conformation of the apoenzyme that is competent for acquiring the cofactor. This Vibrio parahaemolyticus serotype O3:K6 (strain RIMD 2210633) protein is Chaperone protein TorD.